The chain runs to 213 residues: Octanoyltransferase (213 aa).

One can recognise a BPL/LPL catalytic domain in the interval 35–213 (DKHGDAVLLL…ERHLPTLVGA (179 aa)). Substrate-binding positions include 73–80 (RGGKITWH), 145–147 (AIG), and 158–160 (GFS). C176 functions as the Acyl-thioester intermediate in the catalytic mechanism.

It belongs to the LipB family.

It is found in the cytoplasm. It catalyses the reaction octanoyl-[ACP] + L-lysyl-[protein] = N(6)-octanoyl-L-lysyl-[protein] + holo-[ACP] + H(+). The protein operates within protein modification; protein lipoylation via endogenous pathway; protein N(6)-(lipoyl)lysine from octanoyl-[acyl-carrier-protein]: step 1/2. In terms of biological role, catalyzes the transfer of endogenously produced octanoic acid from octanoyl-acyl-carrier-protein onto the lipoyl domains of lipoate-dependent enzymes. Lipoyl-ACP can also act as a substrate although octanoyl-ACP is likely to be the physiological substrate. The sequence is that of Octanoyltransferase from Salinispora arenicola (strain CNS-205).